The chain runs to 170 residues: MDLRDYIASIPDYPEKGIVFRDISPLMANGDAYREATKQIVDYAKEKRIDMVVGPEARGFIVGCPVAYELGVGFAPVRKKGKLPRETIEVTYDLEYGSDTLTLHKDAITPGQRVLICDDLLATGGTIKATIELVEQLGGIVVGCAFLIELMDLHGRDKIDGYDIVTLMEY.

This sequence belongs to the purine/pyrimidine phosphoribosyltransferase family. Homodimer.

Its subcellular location is the cytoplasm. It catalyses the reaction AMP + diphosphate = 5-phospho-alpha-D-ribose 1-diphosphate + adenine. It functions in the pathway purine metabolism; AMP biosynthesis via salvage pathway; AMP from adenine: step 1/1. Its function is as follows. Catalyzes a salvage reaction resulting in the formation of AMP, that is energically less costly than de novo synthesis. The chain is Adenine phosphoribosyltransferase from Enterococcus faecalis (strain ATCC 700802 / V583).